Here is a 161-residue protein sequence, read N- to C-terminus: Phosphopantetheine adenylyltransferase (161 aa).

Threonine 10 serves as a coordination point for substrate. ATP-binding positions include 10 to 11 and histidine 18; that span reads TF. Residues lysine 42, leucine 74, and arginine 88 each contribute to the substrate site. ATP contacts are provided by residues 89–91, glutamate 99, and 124–130; these read GIR and WRYLSST.

Belongs to the bacterial CoaD family. In terms of assembly, homohexamer. Mg(2+) serves as cofactor.

Its subcellular location is the cytoplasm. It carries out the reaction (R)-4'-phosphopantetheine + ATP + H(+) = 3'-dephospho-CoA + diphosphate. The protein operates within cofactor biosynthesis; coenzyme A biosynthesis; CoA from (R)-pantothenate: step 4/5. Its function is as follows. Reversibly transfers an adenylyl group from ATP to 4'-phosphopantetheine, yielding dephospho-CoA (dPCoA) and pyrophosphate. The protein is Phosphopantetheine adenylyltransferase of Haemophilus ducreyi (strain 35000HP / ATCC 700724).